Here is a 466-residue protein sequence, read N- to C-terminus: ATP synthase subunit beta, sodium ion specific (466 aa).

An ATP-binding site is contributed by 153-160 (GGAGVGKT).

Belongs to the ATPase alpha/beta chains family. In terms of assembly, F-type ATPases have 2 components, CF(1) - the catalytic core - and CF(0) - the membrane proton channel. CF(1) has five subunits: alpha(3), beta(3), gamma(1), delta(1), epsilon(1). CF(0) has three main subunits: a, b and c.

It localises to the cell membrane. The catalysed reaction is 4 Na(+)(in) + ATP + H2O = 4 Na(+)(out) + ADP + phosphate + H(+). Inhibited by nitrate. In terms of biological role, produces ATP from ADP in the presence of a sodium ion gradient across the membrane. The beta chain is the catalytic subunit. This chain is ATP synthase subunit beta, sodium ion specific, found in Acetobacterium woodii (strain ATCC 29683 / DSM 1030 / JCM 2381 / KCTC 1655 / WB1).